The sequence spans 294 residues: ATP synthase gamma chain (294 aa).

Belongs to the ATPase gamma chain family. As to quaternary structure, F-type ATPases have 2 components, CF(1) - the catalytic core - and CF(0) - the membrane proton channel. CF(1) has five subunits: alpha(3), beta(3), gamma(1), delta(1), epsilon(1). CF(0) has three main subunits: a, b and c.

The protein resides in the cell inner membrane. Its function is as follows. Produces ATP from ADP in the presence of a proton gradient across the membrane. The gamma chain is believed to be important in regulating ATPase activity and the flow of protons through the CF(0) complex. In Rhizobium leguminosarum bv. trifolii (strain WSM2304), this protein is ATP synthase gamma chain.